The sequence spans 334 residues: MKILITGTAGFIGSHLAKKLIKQGHYVIGVDSINDYYSVSLKEDRLKSIGKENFTFNKVKLENYDDLSKVFVDEQPEVVVNLAAQAGVRYSIENPRTYIDSNIVGFMNILECSRHFNIQNLIYASSSSVYGANTSKPFSTSDNIDHPLSLYAATKKSNELMAHTYSHLYNLPTTGLRFFTVYGPWGRPDMALFKFTKAIVNDQAIDVYNHGNMMRDFTYVDDIVEAISRLVKKPASPNKEWSGADPDPGSSYAPYKVYNIGNNSPVRLMEFVEAIENKLGKEARKNYMDLQPGDVPETYANVDDLFRDIDFKPETTIQDGVNKFVDWYLEYYKK.

Substrate is bound at residue Ser126. The active-site Proton acceptor is Tyr151.

The protein belongs to the NAD(P)-dependent epimerase/dehydratase family.

Its pathway is capsule biogenesis; capsule polysaccharide biosynthesis. In terms of biological role, required for the biosynthesis of type 1 capsular polysaccharide. This Staphylococcus aureus protein is Protein CapI (capI).